A 473-amino-acid chain; its full sequence is Cysteine--tRNA ligase (473 aa).

Residue C29 participates in Zn(2+) binding. Positions A31–H41 match the 'HIGH' region motif. Zn(2+)-binding residues include C207, H232, and E236. Residues K263–S267 carry the 'KMSKS' region motif. K266 is a binding site for ATP.

It belongs to the class-I aminoacyl-tRNA synthetase family. In terms of assembly, monomer. The cofactor is Zn(2+).

Its subcellular location is the cytoplasm. It catalyses the reaction tRNA(Cys) + L-cysteine + ATP = L-cysteinyl-tRNA(Cys) + AMP + diphosphate. The sequence is that of Cysteine--tRNA ligase from Corynebacterium kroppenstedtii (strain DSM 44385 / JCM 11950 / CIP 105744 / CCUG 35717).